Reading from the N-terminus, the 87-residue chain is U3-theraphotoxin-Hhn1a 18 (87 aa).

The first 24 residues, 1 to 24 (MVNTKASMFLTFAGLVLLFVVCYA), serve as a signal peptide directing secretion. Positions 25–52 (SESEEKEFPKEMLSSIFAVDNDFKQEER) are excised as a propeptide. Intrachain disulfides connect C54-C67, C61-C72, and C66-C79.

It belongs to the neurotoxin 10 (Hwtx-1) family. 51 (Hntx-8) subfamily. Hntx-8 sub-subfamily. Expressed by the venom gland.

The protein resides in the secreted. In terms of biological role, ion channel inhibitor. This chain is U3-theraphotoxin-Hhn1a 18, found in Cyriopagopus hainanus (Chinese bird spider).